The primary structure comprises 475 residues: FAD-dependent monooxygenase penE (475 aa).

The FAD site is built by E35, G49, and R108. Y216 is an active-site residue. D308 and A321 together coordinate FAD. N-linked (GlcNAc...) asparagine glycosylation occurs at N437. The helical transmembrane segment at 446-466 (WGSIWLSPVILCLFCMLFLWP) threads the bilayer.

The protein belongs to the paxM FAD-dependent monooxygenase family. FAD serves as cofactor.

The protein localises to the membrane. It catalyses the reaction [(1'E)-3'-hydroxy-3',7'-dimethylocta-1',6'-dien-1'-yl]-quinolinone B + NADPH + O2 + H(+) = [(1'E)-5'-(3',3'-dimethyloxiran-2'-yl)-3'-hydroxy-3'-methylpent-1'-en-1'-yl]-quinolinone B + NADP(+) + H2O. It participates in secondary metabolite biosynthesis. Its pathway is alkaloid biosynthesis. It functions in the pathway mycotoxin biosynthesis. Its function is as follows. FAD-dependent monooxygenase; part of the gene cluster that mediates the biosynthesis of penigequinolones, potent insecticidal alkaloids that contain a highly modified 10-carbon prenyl group. The first stage is catalyzed by the nonribosomal peptide synthetase penN that condenses anthranilic acid and O-methyl-L-tyrosine to produce 4'-methoxycyclopeptin. 4'-methoxycyclopeptin is then converted to 4'-methoxydehydrocyclopeptin by the ketoglutarate-dependent dioxygenase penM through dehydrogenation to form a double bond between C-alpha and C-beta of the O-methyltyrosine side chain. PenM also converts its first product methoxydehydrocyclopeptin to 4'-methoxycyclopenin. The following conversion of 4'methoxycyclopenin into 4'-methoxyviridicatin is catalyzed by the cyclopenase penL. 4'-methoxyviridicatin is the precursor of quinolone natural products, and is further converted to quinolinone B. The prenyltransferase penI then catalyzes the canonical Friedel-Crafts alkylation of quinolinone B with dimethylallyl cation to yield dimethylallyl quinolone, which is subjected to FAD-dependent dehydrogenation by the FAD-linked oxidoreductase penH to yield conjugated aryl diene. The delta(3') double bond then serves as the site of the second alkylation with DMAPP catalyzed by the prenyltransferase penG to yield a carbenium ion intermediate, which can be attacked by H(2)O to yield a styrenyl quinolone containing a C3'-hydroxyprenyl chain, or undergo cyclization to yield yaequinolones J1 and J2. The conversion of the styrenyl quinolone into the tetrahydrofuran-containing yaequinolone C is performed by the FAD-dependent monooxygenase penE and involves epoxidation of the terminal C7'-C8' olefin, followed by epoxide ring opening initiated by the C3' hydroxyl group. The predicted cysteine hydrolase penJ acts as an epoxide hydrolase that enhances the rate of the 5-exo-tet cyclization step, increasing the yield of yaequinolone C. PenF catalyzes the cationic rearrangement of the epoxide formed by penE (before ring opening to produce yaequinolone C) into yaequinolone D. Finally, the short-chain dehydrogenase/reductase (SDR)-like reductase penD, catalyzes both the dehydration of yaequinolone D and the reduction of the resulting oxonium to yield penigequinolone. This Penicillium thymicola protein is FAD-dependent monooxygenase penE.